We begin with the raw amino-acid sequence, 138 residues long: Ribosome-binding factor A (138 aa).

The segment at 116–138 is disordered; sequence VAQDSQHQEGPASPDAKPESTEE.

This sequence belongs to the RbfA family. In terms of assembly, monomer. Binds 30S ribosomal subunits, but not 50S ribosomal subunits or 70S ribosomes.

It localises to the cytoplasm. One of several proteins that assist in the late maturation steps of the functional core of the 30S ribosomal subunit. Associates with free 30S ribosomal subunits (but not with 30S subunits that are part of 70S ribosomes or polysomes). Required for efficient processing of 16S rRNA. May interact with the 5'-terminal helix region of 16S rRNA. In Pseudomonas syringae pv. tomato (strain ATCC BAA-871 / DC3000), this protein is Ribosome-binding factor A.